The chain runs to 479 residues: Ribulose bisphosphate carboxylase large chain 2 (479 aa).

Residues asparagine 116 and threonine 166 each contribute to the substrate site. Catalysis depends on lysine 168, which acts as the Proton acceptor. Lysine 170 contributes to the substrate binding site. Mg(2+)-binding residues include lysine 194, aspartate 196, and glutamate 197. Residue lysine 194 is modified to N6-carboxylysine. Histidine 287 serves as the catalytic Proton acceptor. Residues arginine 288, histidine 320, and serine 372 each contribute to the substrate site.

The protein belongs to the RuBisCO large chain family. Type I subfamily. As to quaternary structure, heterohexadecamer of 8 large chains and 8 small chains. Mg(2+) is required as a cofactor.

The catalysed reaction is 2 (2R)-3-phosphoglycerate + 2 H(+) = D-ribulose 1,5-bisphosphate + CO2 + H2O. It carries out the reaction D-ribulose 1,5-bisphosphate + O2 = 2-phosphoglycolate + (2R)-3-phosphoglycerate + 2 H(+). RuBisCO catalyzes two reactions: the carboxylation of D-ribulose 1,5-bisphosphate, the primary event in carbon dioxide fixation, as well as the oxidative fragmentation of the pentose substrate. Both reactions occur simultaneously and in competition at the same active site. The sequence is that of Ribulose bisphosphate carboxylase large chain 2 from Bradyrhizobium sp. (strain BTAi1 / ATCC BAA-1182).